Here is a 116-residue protein sequence, read N- to C-terminus: MGTSELLKHIYDINLSYLLLAQRLINDEKASAMFRLGIDETMADALAQLTLPQMVKLAETNQLVCQFRFNDHQTIERLTKESRVDDLQQIHTGILLSSHLLQELSAKDGSATKKRA.

It belongs to the FlhD family. As to quaternary structure, homodimer; disulfide-linked. Forms a heterohexamer composed of two FlhC and four FlhD subunits. Each FlhC binds a FlhD dimer, forming a heterotrimer, and a hexamer assembles by dimerization of two heterotrimers.

The protein resides in the cytoplasm. In terms of biological role, functions in complex with FlhC as a master transcriptional regulator that regulates transcription of several flagellar and non-flagellar operons by binding to their promoter region. Activates expression of class 2 flagellar genes, including fliA, which is a flagellum-specific sigma factor that turns on the class 3 genes. Also regulates genes whose products function in a variety of physiological pathways. This is Flagellar transcriptional regulator FlhD from Serratia proteamaculans (strain 568).